We begin with the raw amino-acid sequence, 470 residues long: Nuclear receptor subfamily 0 group B member 1 (470 aa).

Tandem repeats lie at residues 1–67 (MAGE…YRCC), 68–133 (FCGK…YRCC), and 134–200 (FCGE…YRCC). The segment at 1-253 (MAGEDHQWQG…RPVALKNPQV (253 aa)) is 4 X 67 AA tandem repeats. Short sequence motifs (LXXLL motif) lie at residues 13-17 (LYNML), 80-84 (LYSML), and 146-150 (LYSLL). One copy of the 4; truncated repeat lies at 201-253 (FCGEDQPQQGSTLYSMPTSTNQTPAAPEERPGAPWWDTSCGALRPVALKNPQV). The NR LBD domain maps to 205 to 469 (DQPQQGSTLY…DMMLEMLCTK (265 aa)). The short motif at 461 to 466 (MMLEML) is the AF-2 motif element.

This sequence belongs to the nuclear hormone receptor family. NR0 subfamily. Homodimer. Interacts with NR5A1, NR5A2, NR0B2 and with COPS2. Interacts with ESRRB; represses ESRRB activity at the GATA6 promoter.

Its subcellular location is the nucleus. It localises to the cytoplasm. Nuclear receptor that lacks a DNA-binding domain and acts as a corepressor that inhibits the transcriptional activity of other nuclear receptors through heterodimeric interactions. Component of a cascade required for the development of the hypothalamic-pituitary-adrenal-gonadal axis. May also have a role in the development of the embryo and in the maintenance of embryonic stem cell pluripotency. The polypeptide is Nuclear receptor subfamily 0 group B member 1 (NR0B1) (Callithrix jacchus (White-tufted-ear marmoset)).